Consider the following 238-residue polypeptide: Lipoarabinomannan carrier protein LprG (238 aa).

The N-terminal stretch at 1-26 (MQAPKHHRRLFAVLATLNTATAVIAG) is a signal peptide. A lipid anchor (N-palmitoyl cysteine) is attached at C27. C27 carries S-diacylglycerol cysteine lipidation.

The protein belongs to the LppX/LprAFG lipoprotein family. Modified by Lgt on Cys-27 with an S-linked diacylglyceral, signal peptide is removed by LspA, Cys-27 is further modifed with a fatty acid on its amino group by Lnt yielding a triacylated protein. Probably glycosylated, which is required for T-cell activation.

The protein localises to the cell inner membrane. Its subcellular location is the secreted. It localises to the cell wall. Helps membrane protein ML0556 (P55) transport triacylglycerides (TAG) across the inner cell membrane into the periplasm and probably ultimately to the outer membrane. Binds TAG in its hydrophobic cavity and transfers it between lipid bilayers. TAG probably regulates lipid metabolism and growth regulation and plays a structural role in the outer membrane. Binds di- and triacylated phosphatidyl-myo-inositol mannosides (PIMs), and glycolipid lipoglycan modulins lipoarabinomannan (LAM) and lipomannan (LM), facilitating their recognition by TLR2. Required for activity of drug efflux transporter ML0556. Required, probably with ML0556, for normal surface localization of LAM. In terms of biological role, constitutes a host TLR2 agonist (toll-like receptor) able to stimulate proliferation of CD4+ T-cells derived from a human leprosy patient following protein processing/presentation by MHC class II molecules in peripheral blood mononuclear cells. This Mycobacterium leprae (strain TN) protein is Lipoarabinomannan carrier protein LprG.